Consider the following 558-residue polypeptide: Kelch-like protein 23 (558 aa).

Residues 36 to 104 form the BTB domain; that stretch reads TDITLQCPSG…AYTSQIEITE (69 aa). A BACK domain is found at 139–240; the sequence is CIGMHSFAEF…DPVYLKTALG (102 aa). 6 Kelch repeats span residues 274–320, 321–369, 370–416, 418–466, 467–508, and 510–557; these read TMYI…CLGP, NIYV…TLGG, CVYA…VLHD, IYVI…PLEN, KLYL…IMNG, and IYVT…CVYN.

The chain is Kelch-like protein 23 (KLHL23) from Pongo abelii (Sumatran orangutan).